A 349-amino-acid polypeptide reads, in one-letter code: Hydrophobic dipeptide epimerase (349 aa).

Residues threonine 127 and 153–155 (KIK) contribute to the substrate site. The Mg(2+) site is built by aspartate 186, glutamate 212, and aspartate 237. Substrate is bound by residues lysine 259 and 309–311 (DLD).

Belongs to the mandelate racemase/muconate lactonizing enzyme family. Mg(2+) serves as cofactor.

Its function is as follows. Catalyzes the epimerization a variety of hydrophobic dipeptides. Epimerase activity is highest with L-Ala-L-Tyr, and lower with L-Ala-L-Met, L-Ala-L-Phe, L-Tyr-L-Ala, L-Tyr-L-Met and L-Tyr-L-Trp (in vitro). This Flavobacteria bacterium (strain MS024-2A) protein is Hydrophobic dipeptide epimerase.